An 854-amino-acid chain; its full sequence is Leucine--tRNA ligase (854 aa).

Residues 1-32 are disordered; the sequence is MARRDMAAETMDPRASTEPSPNEPREPARYDH. Residues 23–32 show a composition bias toward basic and acidic residues; that stretch reads EPREPARYDH. The short motif at 69–80 is the 'HIGH' region element; it reads PYPSGSGLHVGH. The 'KMSKS' region motif lies at 633–637; sequence KMSKS. Lysine 636 lines the ATP pocket.

Belongs to the class-I aminoacyl-tRNA synthetase family.

The protein resides in the cytoplasm. It carries out the reaction tRNA(Leu) + L-leucine + ATP = L-leucyl-tRNA(Leu) + AMP + diphosphate. This chain is Leucine--tRNA ligase, found in Sorangium cellulosum (strain So ce56) (Polyangium cellulosum (strain So ce56)).